The primary structure comprises 315 residues: Methionyl-tRNA formyltransferase (315 aa).

113 to 116 (SLLP) lines the (6S)-5,6,7,8-tetrahydrofolate pocket.

Belongs to the Fmt family.

It carries out the reaction L-methionyl-tRNA(fMet) + (6R)-10-formyltetrahydrofolate = N-formyl-L-methionyl-tRNA(fMet) + (6S)-5,6,7,8-tetrahydrofolate + H(+). Its function is as follows. Attaches a formyl group to the free amino group of methionyl-tRNA(fMet). The formyl group appears to play a dual role in the initiator identity of N-formylmethionyl-tRNA by promoting its recognition by IF2 and preventing the misappropriation of this tRNA by the elongation apparatus. The chain is Methionyl-tRNA formyltransferase from Shigella boydii serotype 4 (strain Sb227).